A 198-amino-acid chain; its full sequence is GTP cyclohydrolase-2 (198 aa).

Position 52 to 56 (R52 to E56) interacts with GTP. Zn(2+) is bound by residues C57, C68, and C70. Residues Q73, E94–R96, and T116 each bind GTP. D128 (proton acceptor) is an active-site residue. R130 acts as the Nucleophile in catalysis. GTP is bound by residues T151 and K156.

The protein belongs to the GTP cyclohydrolase II family. Zn(2+) serves as cofactor.

It catalyses the reaction GTP + 4 H2O = 2,5-diamino-6-hydroxy-4-(5-phosphoribosylamino)-pyrimidine + formate + 2 phosphate + 3 H(+). It participates in cofactor biosynthesis; riboflavin biosynthesis; 5-amino-6-(D-ribitylamino)uracil from GTP: step 1/4. Catalyzes the conversion of GTP to 2,5-diamino-6-ribosylamino-4(3H)-pyrimidinone 5'-phosphate (DARP), formate and pyrophosphate. The protein is GTP cyclohydrolase-2 of Vibrio parahaemolyticus serotype O3:K6 (strain RIMD 2210633).